The primary structure comprises 302 residues: Sulfate adenylyltransferase subunit 2 (302 aa).

Residues 280–302 (RQGRLIDSDQSASMEQKKRQGYF) are disordered.

It belongs to the PAPS reductase family. CysD subfamily. Heterodimer composed of CysD, the smaller subunit, and CysN.

It catalyses the reaction sulfate + ATP + H(+) = adenosine 5'-phosphosulfate + diphosphate. It functions in the pathway sulfur metabolism; hydrogen sulfide biosynthesis; sulfite from sulfate: step 1/3. Functionally, with CysN forms the ATP sulfurylase (ATPS) that catalyzes the adenylation of sulfate producing adenosine 5'-phosphosulfate (APS) and diphosphate, the first enzymatic step in sulfur assimilation pathway. APS synthesis involves the formation of a high-energy phosphoric-sulfuric acid anhydride bond driven by GTP hydrolysis by CysN coupled to ATP hydrolysis by CysD. The sequence is that of Sulfate adenylyltransferase subunit 2 from Shewanella baltica (strain OS223).